We begin with the raw amino-acid sequence, 490 residues long: Cobyric acid synthase (490 aa).

The GATase cobBQ-type domain maps to 252 to 439 (RLKVVVPVLP…LHGLFESTAA (188 aa)). Cysteine 333 acts as the Nucleophile in catalysis. The active site involves histidine 431.

The protein belongs to the CobB/CobQ family. CobQ subfamily.

It participates in cofactor biosynthesis; adenosylcobalamin biosynthesis. Its function is as follows. Catalyzes amidations at positions B, D, E, and G on adenosylcobyrinic A,C-diamide. NH(2) groups are provided by glutamine, and one molecule of ATP is hydrogenolyzed for each amidation. The sequence is that of Cobyric acid synthase from Pseudomonas paraeruginosa (strain DSM 24068 / PA7) (Pseudomonas aeruginosa (strain PA7)).